A 322-amino-acid polypeptide reads, in one-letter code: SUMO-activating enzyme subunit 1A (322 aa).

Met1 is modified (N-acetylmethionine).

This sequence belongs to the ubiquitin-activating E1 family. As to quaternary structure, heterodimer of SAE1A or SAE1B and SAE2. The complex binds SUMO proteins via SAE2.

Its subcellular location is the nucleus. It functions in the pathway protein modification; protein sumoylation. Its function is as follows. The dimeric enzyme acts as an E1 ligase for SUMO1 and SUMO2. It mediates ATP-dependent activation of SUMO proteins and formation of a thioester with a conserved cysteine residue on SAE2. Functionally redundant with its paralog SAE1B. The protein is SUMO-activating enzyme subunit 1A (SAE1A) of Arabidopsis thaliana (Mouse-ear cress).